The sequence spans 453 residues: Phosphoglucosamine mutase (453 aa).

The active-site Phosphoserine intermediate is Ser100. Residues Ser100, Asp239, Asp241, and Asp243 each coordinate Mg(2+). Residue Ser100 is modified to Phosphoserine.

It belongs to the phosphohexose mutase family. Mg(2+) is required as a cofactor. In terms of processing, activated by phosphorylation.

The catalysed reaction is alpha-D-glucosamine 1-phosphate = D-glucosamine 6-phosphate. Catalyzes the conversion of glucosamine-6-phosphate to glucosamine-1-phosphate. The polypeptide is Phosphoglucosamine mutase (Buchnera aphidicola subsp. Baizongia pistaciae (strain Bp)).